Here is a 105-residue protein sequence, read N- to C-terminus: Venom metalloprotease inhibitor (105 aa).

The N-terminal stretch at 1–21 (MFRFVCVLFIALVVFCTTTSA) is a signal peptide. 5 disulfides stabilise this stretch: Cys-26-Cys-61, Cys-35-Cys-57, Cys-39-Cys-50, Cys-43-Cys-83, and Cys-63-Cys-77. One can recognise a TIL domain in the interval 26 to 83 (CNRPNEEYRCGSACQTTCATLGQRCPIMNIRCNDACYCKEGYARYGDDTGMCVSISQC).

It belongs to the serine protease inhibitor-like (TIL domain-containing) family. In terms of tissue distribution, expressed by the venom gland.

It is found in the secreted. Its function is as follows. Inhibits metalloprotease (human MMP3), trypsin, chymotrypsin, plasmin and microbial serine protease (proteinase K). Exhibits antifibrinolytic activity by binding plasmin and inhibiting it. Does not inhibit elastase, thrombin or microbial serine protease (subtilisin A). The protein is Venom metalloprotease inhibitor of Bombus ignitus (Bumblebee).